An 89-amino-acid chain; its full sequence is UPF0223 protein Bcer98_2663 (89 aa).

The protein belongs to the UPF0223 family.

The chain is UPF0223 protein Bcer98_2663 from Bacillus cytotoxicus (strain DSM 22905 / CIP 110041 / 391-98 / NVH 391-98).